Consider the following 623-residue polypeptide: Glutathione import ATP-binding protein GsiA (623 aa).

2 consecutive ABC transporter domains span residues 15–269 and 325–564; these read VSGL…QTLL and LRSG…RKLM. Residues 49-56 and 357-364 contribute to the ATP site; these read GESGSGKS.

Belongs to the ABC transporter superfamily. Glutathione importer (TC 3.A.1.5.11) family. As to quaternary structure, the complex is composed of two ATP-binding proteins (GsiA), two transmembrane proteins (GsiC and GsiD) and a solute-binding protein (GsiB).

The protein resides in the cell inner membrane. The enzyme catalyses glutathione(out) + ATP + H2O = glutathione(in) + ADP + phosphate + H(+). In terms of biological role, part of the ABC transporter complex GsiABCD involved in glutathione import. Responsible for energy coupling to the transport system. This chain is Glutathione import ATP-binding protein GsiA, found in Salmonella typhi.